A 262-amino-acid chain; its full sequence is 3-methyl-2-oxobutanoate hydroxymethyltransferase (262 aa).

Mg(2+)-binding residues include Asp43 and Asp82. 3-methyl-2-oxobutanoate contacts are provided by residues 43 to 44 (DS), Asp82, and Lys111. Position 113 (Glu113) interacts with Mg(2+). Glu180 functions as the Proton acceptor in the catalytic mechanism.

The protein belongs to the PanB family. Homodecamer; pentamer of dimers. Mg(2+) serves as cofactor.

It is found in the cytoplasm. It carries out the reaction 3-methyl-2-oxobutanoate + (6R)-5,10-methylene-5,6,7,8-tetrahydrofolate + H2O = 2-dehydropantoate + (6S)-5,6,7,8-tetrahydrofolate. It functions in the pathway cofactor biosynthesis; (R)-pantothenate biosynthesis; (R)-pantoate from 3-methyl-2-oxobutanoate: step 1/2. Functionally, catalyzes the reversible reaction in which hydroxymethyl group from 5,10-methylenetetrahydrofolate is transferred onto alpha-ketoisovalerate to form ketopantoate. This is 3-methyl-2-oxobutanoate hydroxymethyltransferase from Wolinella succinogenes (strain ATCC 29543 / DSM 1740 / CCUG 13145 / JCM 31913 / LMG 7466 / NCTC 11488 / FDC 602W) (Vibrio succinogenes).